We begin with the raw amino-acid sequence, 358 residues long: UDP-N-acetylglucosamine--N-acetylmuramyl-(pentapeptide) pyrophosphoryl-undecaprenol N-acetylglucosamine transferase (358 aa).

UDP-N-acetyl-alpha-D-glucosamine contacts are provided by S197 and Q288.

It belongs to the glycosyltransferase 28 family. MurG subfamily.

It is found in the cell membrane. It carries out the reaction Mur2Ac(oyl-L-Ala-gamma-D-Glu-L-Lys-D-Ala-D-Ala)-di-trans,octa-cis-undecaprenyl diphosphate + UDP-N-acetyl-alpha-D-glucosamine = beta-D-GlcNAc-(1-&gt;4)-Mur2Ac(oyl-L-Ala-gamma-D-Glu-L-Lys-D-Ala-D-Ala)-di-trans,octa-cis-undecaprenyl diphosphate + UDP + H(+). The protein operates within cell wall biogenesis; peptidoglycan biosynthesis. Its function is as follows. Cell wall formation. Catalyzes the transfer of a GlcNAc subunit on undecaprenyl-pyrophosphoryl-MurNAc-pentapeptide (lipid intermediate I) to form undecaprenyl-pyrophosphoryl-MurNAc-(pentapeptide)GlcNAc (lipid intermediate II). The sequence is that of UDP-N-acetylglucosamine--N-acetylmuramyl-(pentapeptide) pyrophosphoryl-undecaprenol N-acetylglucosamine transferase from Streptococcus agalactiae serotype Ia (strain ATCC 27591 / A909 / CDC SS700).